Consider the following 583-residue polypeptide: Isocitrate dehydrogenase kinase/phosphatase (583 aa).

Residues 315 to 321 (APGIRGM) and Lys336 each bind ATP. Residue Asp371 is part of the active site.

Belongs to the AceK family.

Its subcellular location is the cytoplasm. The enzyme catalyses L-seryl-[isocitrate dehydrogenase] + ATP = O-phospho-L-seryl-[isocitrate dehydrogenase] + ADP + H(+). Functionally, bifunctional enzyme which can phosphorylate or dephosphorylate isocitrate dehydrogenase (IDH) on a specific serine residue. This is a regulatory mechanism which enables bacteria to bypass the Krebs cycle via the glyoxylate shunt in response to the source of carbon. When bacteria are grown on glucose, IDH is fully active and unphosphorylated, but when grown on acetate or ethanol, the activity of IDH declines drastically concomitant with its phosphorylation. This is Isocitrate dehydrogenase kinase/phosphatase from Salmonella gallinarum (strain 287/91 / NCTC 13346).